A 243-amino-acid chain; its full sequence is Leucyl/phenylalanyl-tRNA--protein transferase (243 aa).

This sequence belongs to the L/F-transferase family.

The protein resides in the cytoplasm. It carries out the reaction N-terminal L-lysyl-[protein] + L-leucyl-tRNA(Leu) = N-terminal L-leucyl-L-lysyl-[protein] + tRNA(Leu) + H(+). The catalysed reaction is N-terminal L-arginyl-[protein] + L-leucyl-tRNA(Leu) = N-terminal L-leucyl-L-arginyl-[protein] + tRNA(Leu) + H(+). The enzyme catalyses L-phenylalanyl-tRNA(Phe) + an N-terminal L-alpha-aminoacyl-[protein] = an N-terminal L-phenylalanyl-L-alpha-aminoacyl-[protein] + tRNA(Phe). Its function is as follows. Functions in the N-end rule pathway of protein degradation where it conjugates Leu, Phe and, less efficiently, Met from aminoacyl-tRNAs to the N-termini of proteins containing an N-terminal arginine or lysine. This chain is Leucyl/phenylalanyl-tRNA--protein transferase, found in Saccharophagus degradans (strain 2-40 / ATCC 43961 / DSM 17024).